The primary structure comprises 464 residues: Argininosuccinate lyase (464 aa).

Belongs to the lyase 1 family. Argininosuccinate lyase subfamily.

It is found in the cytoplasm. The catalysed reaction is 2-(N(omega)-L-arginino)succinate = fumarate + L-arginine. Its pathway is amino-acid biosynthesis; L-arginine biosynthesis; L-arginine from L-ornithine and carbamoyl phosphate: step 3/3. This is Argininosuccinate lyase from Koribacter versatilis (strain Ellin345).